We begin with the raw amino-acid sequence, 105 residues long: MVKQIDSKDAFQEALDAAGDKLVVVDFSATWCGPCKMIKPFFHSLSEKYSNVVFLEVDVDDCQDVASECEVKCMPTFQFFKKGQKVGEFSGANKEKLEATINEFV.

In terms of domain architecture, Thioredoxin spans 2–105 (VKQIDSKDAF…KLEATINEFV (104 aa)). The residue at position 3 (Lys-3) is an N6-acetyllysine. Lys-8 is subject to N6-succinyllysine. Active-site nucleophile residues include Cys-32 and Cys-35. A disulfide bridge connects residues Cys-32 and Cys-35. The residue at position 39 (Lys-39) is an N6-acetyllysine. Cys-62 and Cys-69 each carry S-nitrosocysteine. Cys-73 carries the S-nitrosocysteine; alternate modification. At Lys-94 the chain carries N6-acetyllysine; alternate. N6-succinyllysine; alternate is present on Lys-94.

It belongs to the thioredoxin family. Homodimer; disulfide-linked. Interacts with TXNIP through the redox-active site. Interacts with MAP3K5 and CASP3. Interacts with APEX1; the interaction stimulates the FOS/JUN AP-1 DNA-binding activity in a redox-dependent manner. In the fully reduced protein, both Cys-69 and Cys-73 are nitrosylated in response to nitric oxide (NO). When two disulfide bonds are present in the protein, only Cys-73 is nitrosylated. Cys-73 can serve as donor for nitrosylation of target proteins.

The protein resides in the nucleus. The protein localises to the cytoplasm. It is found in the secreted. In terms of biological role, participates in various redox reactions through the reversible oxidation of its active center dithiol to a disulfide and catalyzes dithiol-disulfide exchange reactions. Plays a role in the reversible S-nitrosylation of cysteine residues in target proteins, and thereby contributes to the response to intracellular nitric oxide. Nitrosylates the active site Cys of CASP3 in response to nitric oxide (NO), and thereby inhibits caspase-3 activity. Induces the FOS/JUN AP-1 DNA binding activity in ionizing radiation (IR) cells through its oxidation/reduction status and stimulates AP-1 transcriptional activity. The polypeptide is Thioredoxin (TXN) (Callithrix jacchus (White-tufted-ear marmoset)).